The following is a 485-amino-acid chain: Cysteine--tRNA ligase (485 aa).

Residue Cys-29 coordinates Zn(2+). A 'HIGH' region motif is present at residues 31–41; it reads VTVYDHCHIGH. The Zn(2+) site is built by Cys-209, His-234, and Glu-238. Residues 266 to 270 carry the 'KMSKS' region motif; the sequence is KMSKS. Residue Lys-269 participates in ATP binding.

This sequence belongs to the class-I aminoacyl-tRNA synthetase family. Monomer. The cofactor is Zn(2+).

The protein localises to the cytoplasm. The catalysed reaction is tRNA(Cys) + L-cysteine + ATP = L-cysteinyl-tRNA(Cys) + AMP + diphosphate. This chain is Cysteine--tRNA ligase, found in Geobacter metallireducens (strain ATCC 53774 / DSM 7210 / GS-15).